The sequence spans 605 residues: Tungsten-containing aldehyde ferredoxin oxidoreductase (605 aa).

The tungstopterin site is built by R76, N93, G95, R182, A183, G185, and R186. C288, C291, and C295 together coordinate [4Fe-4S] cluster. Tungstopterin contacts are provided by D338, L342, D343, R444, K450, D489, and L493. C494 contacts [4Fe-4S] cluster. L495 provides a ligand contact to tungstopterin.

It belongs to the AOR/FOR family. As to quaternary structure, monomer. Homodimer. [4Fe-4S] cluster is required as a cofactor. Tungstopterin serves as cofactor.

The enzyme catalyses an aldehyde + 2 oxidized [2Fe-2S]-[ferredoxin] + H2O = a carboxylate + 2 reduced [2Fe-2S]-[ferredoxin] + 3 H(+). Its activity is regulated as follows. Inhibited by arsenite, iodoacetate and cyanide. Its function is as follows. Aldehyde ferredoxin oxidoreductase with a broad substrate specificity. Catalyzes the oxidation of a range of aliphatic aldehydes to their corresponding carboxylic acids. In vitro can use crotonaldehyde, acetaldehyde, formaldehyde, butyraldehyde or glyceraldehyde as substrate, using methyl viologen or ferredoxin, but not NAD(P), as the electron acceptor. Does not oxidize glucose or glyceraldehyde 3-phosphate. May be involved in a pyroglycolytic pathway. The protein is Tungsten-containing aldehyde ferredoxin oxidoreductase of Pyrococcus furiosus (strain ATCC 43587 / DSM 3638 / JCM 8422 / Vc1).